The primary structure comprises 338 residues: Protein pelota homolog (338 aa).

It belongs to the eukaryotic release factor 1 family. Pelota subfamily. As to quaternary structure, monomer. A divalent metal cation is required as a cofactor.

The protein localises to the cytoplasm. Functionally, may function in recognizing stalled ribosomes, interact with stem-loop structures in stalled mRNA molecules, and effect endonucleolytic cleavage of the mRNA. May play a role in the release non-functional ribosomes and degradation of damaged mRNAs. Has endoribonuclease activity. This Caldivirga maquilingensis (strain ATCC 700844 / DSM 13496 / JCM 10307 / IC-167) protein is Protein pelota homolog.